Consider the following 170-residue polypeptide: Gas vesicle protein A2 (170 aa).

Residues 86-170 (SPMAKTVGRA…PRRRTEEEDR (85 aa)) form a disordered region. 2 stretches are compositionally biased toward basic and acidic residues: residues 104–119 (LTDKVRDVLTPEHEHE) and 127–137 (DRPRAGAERGR). The segment covering 138 to 148 (STQRPRSRPAA) has biased composition (basic residues). A compositionally biased stretch (basic and acidic residues) spans 149–170 (RPRDEDDRPRSRPRRRTEEEDR).

Belongs to the gas vesicle GvpA family. As to quaternary structure, the gas vesicle shell is 2 nm thick and consists of a single layer of this protein. It forms helical ribs nearly perpendicular to the long axis of the vesicle.

Its subcellular location is the gas vesicle shell. Its function is as follows. Gas vesicles are hollow, gas filled proteinaceous nanostructures found in some microorganisms. During planktonic growth they allow positioning of the organism at a favorable depth for light or nutrient acquisition. GvpA forms the protein shell. It is not clear what function GVs perform in soil bacteria. The protein is Gas vesicle protein A2 of Streptomyces coelicolor (strain ATCC BAA-471 / A3(2) / M145).